Consider the following 474-residue polypeptide: Melanopsin (474 aa).

Over 1-72 the chain is Extracellular; that stretch reads MNSPSESRVP…VDVPDHAHYT (72 aa). 2 N-linked (GlcNAc...) asparagine glycosylation sites follow: asparagine 31 and asparagine 35. Residues 73-93 traverse the membrane as a helical segment; the sequence is LGTVILLVGLTGMLGNLTVIY. The Cytoplasmic segment spans residues 94 to 107; the sequence is TFCRNRGLRTPANM. The chain crosses the membrane as a helical span at residues 108–128; sequence LIINLAVSDFLMSFTQAPVFF. Over 129-144 the chain is Extracellular; that stretch reads ASSLYKKWLFGETGCK. Cysteine 143 and cysteine 221 are joined by a disulfide. A helical membrane pass occupies residues 145-165; the sequence is FYAFCGAVFGIVSMITLTAIA. The Cytoplasmic segment spans residues 166–188; the sequence is MDRYLVITRPLATIGMRSKRRTA. The helical transmembrane segment at 189-209 threads the bilayer; that stretch reads LVLLGVWLYALAWSLPPFFGW. Topologically, residues 210-238 are extracellular; it reads SAYVPEGLLTSCSWDYVTFTPLVRAYTML. A helical transmembrane segment spans residues 239–259; it reads LFCFVFFLPLLIIIFCYIFIF. Residues 260–293 lie on the Cytoplasmic side of the membrane; it reads RAIRETGRACEGCGESPLRRRQWQRLQSEWKMAK. The chain crosses the membrane as a helical span at residues 294–314; the sequence is VALIVILLFVLSWAPYSTVAL. The Extracellular segment spans residues 315-355; sequence VGFAGYSHILTPYMSSVPAVIAKASAIHNPIIYAITHPKYR. Lysine 337 bears the N6-(retinylidene)lysine mark. A helical membrane pass occupies residues 356 to 372; sequence AAIAQHLPCLGVLLGVS. Residues 373–474 lie on the Cytoplasmic side of the membrane; it reads GQRSHPSLSY…RHLPSLDRRM (102 aa). The interval 428 to 474 is disordered; the sequence is AAQQASGQSFCSHDLEDGEVKAPSSPQEQKSKTPKTKRHLPSLDRRM.

Belongs to the G-protein coupled receptor 1 family. Opsin subfamily. Eye; expressed in a photosensitive subset of retinal ganglion cells (at protein level).

The protein resides in the cell membrane. Its subcellular location is the cell projection. The protein localises to the axon. It is found in the dendrite. It localises to the perikaryon. Photoreceptor that binds cis-retinaldehydes. Contributes to pupillar reflex, photoentrainment and other non-image forming responses to light. May be involved in the optokinetic visual tracking response. May be involved in the regulation of retinal hyaloid vessel growth and regression. The protein is Melanopsin of Rattus norvegicus (Rat).